The sequence spans 474 residues: 3-isopropylmalate dehydratase large subunit (474 aa).

Residues C353, C414, and C417 each contribute to the [4Fe-4S] cluster site.

This sequence belongs to the aconitase/IPM isomerase family. LeuC type 1 subfamily. Heterodimer of LeuC and LeuD. [4Fe-4S] cluster serves as cofactor.

The catalysed reaction is (2R,3S)-3-isopropylmalate = (2S)-2-isopropylmalate. It participates in amino-acid biosynthesis; L-leucine biosynthesis; L-leucine from 3-methyl-2-oxobutanoate: step 2/4. In terms of biological role, catalyzes the isomerization between 2-isopropylmalate and 3-isopropylmalate, via the formation of 2-isopropylmaleate. The chain is 3-isopropylmalate dehydratase large subunit from Pseudomonas aeruginosa (strain LESB58).